The following is a 180-amino-acid chain: NAD(P)H-quinone oxidoreductase subunit I, chloroplastic (180 aa).

2 consecutive 4Fe-4S ferredoxin-type domains span residues 55-84 (GRIH…VDWR) and 95-124 (LNYS…MTEE). Residues cysteine 64, cysteine 67, cysteine 70, cysteine 74, cysteine 104, cysteine 107, cysteine 110, and cysteine 114 each coordinate [4Fe-4S] cluster.

Belongs to the complex I 23 kDa subunit family. In terms of assembly, NDH is composed of at least 16 different subunits, 5 of which are encoded in the nucleus. It depends on [4Fe-4S] cluster as a cofactor.

It is found in the plastid. The protein resides in the chloroplast thylakoid membrane. The enzyme catalyses a plastoquinone + NADH + (n+1) H(+)(in) = a plastoquinol + NAD(+) + n H(+)(out). It carries out the reaction a plastoquinone + NADPH + (n+1) H(+)(in) = a plastoquinol + NADP(+) + n H(+)(out). Functionally, NDH shuttles electrons from NAD(P)H:plastoquinone, via FMN and iron-sulfur (Fe-S) centers, to quinones in the photosynthetic chain and possibly in a chloroplast respiratory chain. The immediate electron acceptor for the enzyme in this species is believed to be plastoquinone. Couples the redox reaction to proton translocation, and thus conserves the redox energy in a proton gradient. The polypeptide is NAD(P)H-quinone oxidoreductase subunit I, chloroplastic (Hordeum vulgare (Barley)).